The chain runs to 431 residues: Argininosuccinate lyase (431 aa).

The protein belongs to the lyase 1 family. Argininosuccinate lyase subfamily.

The protein resides in the cytoplasm. The enzyme catalyses 2-(N(omega)-L-arginino)succinate = fumarate + L-arginine. Its pathway is amino-acid biosynthesis; L-arginine biosynthesis; L-arginine from L-ornithine and carbamoyl phosphate: step 3/3. In Xanthomonas campestris pv. campestris (strain B100), this protein is Argininosuccinate lyase.